A 586-amino-acid polypeptide reads, in one-letter code: Laccase-9 (586 aa).

An N-terminal signal peptide occupies residues 1-25 (MPRVHHSLSNQAFLVLLLFSSIASA). 2 consecutive Plastocyanin-like domains span residues 33-149 (HVKD…PRSG) and 159-307 (KEVP…YEGA). Asn-52, Asn-74, and Asn-79 each carry an N-linked (GlcNAc...) asparagine glycan. His-83 and His-85 together coordinate Cu cation. A glycan (N-linked (GlcNAc...) asparagine) is linked at Asn-111. His-128 and His-130 together coordinate Cu cation. Asn-236, Asn-333, Asn-385, Asn-403, and Asn-451 each carry an N-linked (GlcNAc...) asparagine glycan. One can recognise a Plastocyanin-like 3 domain in the interval 411–552 (DFPDQPPLKF…MMAFIVQNGP (142 aa)). Positions 469, 472, 474, 531, 532, 533, and 537 each coordinate Cu cation.

It belongs to the multicopper oxidase family. Cu cation is required as a cofactor. In terms of tissue distribution, predominantly expressed in roots.

The protein localises to the secreted. Its subcellular location is the extracellular space. It is found in the apoplast. It carries out the reaction 4 hydroquinone + O2 = 4 benzosemiquinone + 2 H2O. Lignin degradation and detoxification of lignin-derived products. The chain is Laccase-9 (LAC9) from Arabidopsis thaliana (Mouse-ear cress).